We begin with the raw amino-acid sequence, 659 residues long: Methionine--tRNA ligase (659 aa).

Positions 13–23 match the 'HIGH' region motif; the sequence is YYPSGNLHIGH. A 'KMSKS' region motif is present at residues 308 to 312; sequence KMSKS. Lys-311 serves as a coordination point for ATP. Positions 559–659 constitute a tRNA-binding domain; it reads DFDKVEIKAA…SAIPNGAVIK (101 aa).

It belongs to the class-I aminoacyl-tRNA synthetase family. MetG type 2B subfamily. Homodimer.

Its subcellular location is the cytoplasm. The enzyme catalyses tRNA(Met) + L-methionine + ATP = L-methionyl-tRNA(Met) + AMP + diphosphate. In terms of biological role, is required not only for elongation of protein synthesis but also for the initiation of all mRNA translation through initiator tRNA(fMet) aminoacylation. The protein is Methionine--tRNA ligase of Staphylococcus haemolyticus (strain JCSC1435).